A 321-amino-acid chain; its full sequence is tRNA dimethylallyltransferase (321 aa).

An ATP-binding site is contributed by G25–S32. A substrate-binding site is contributed by T27–S32. The interval D50–Q53 is interaction with substrate tRNA.

The protein belongs to the IPP transferase family. In terms of assembly, monomer. Mg(2+) is required as a cofactor.

The enzyme catalyses adenosine(37) in tRNA + dimethylallyl diphosphate = N(6)-dimethylallyladenosine(37) in tRNA + diphosphate. In terms of biological role, catalyzes the transfer of a dimethylallyl group onto the adenine at position 37 in tRNAs that read codons beginning with uridine, leading to the formation of N6-(dimethylallyl)adenosine (i(6)A). The polypeptide is tRNA dimethylallyltransferase (Rhodopseudomonas palustris (strain ATCC BAA-98 / CGA009)).